Here is a 110-residue protein sequence, read N- to C-terminus: UPF0060 membrane protein RSp1275 (110 aa).

4 consecutive transmembrane segments (helical) span residues 8 to 28 (FLFA…WLVL), 33 to 53 (SAWL…LLTL), 63 to 83 (AAYG…VDGA), and 90 to 110 (IGGA…PQPT).

It belongs to the UPF0060 family.

The protein localises to the cell inner membrane. The sequence is that of UPF0060 membrane protein RSp1275 from Ralstonia nicotianae (strain ATCC BAA-1114 / GMI1000) (Ralstonia solanacearum).